A 757-amino-acid polypeptide reads, in one-letter code: Probable phospholipase C20G8.02, mitochondrial (757 aa).

The N-terminal 13 residues, 1–13 (MILYIVLPFYVRT), are a transit peptide targeting the mitochondrion. Residues 289-330 (ESNSKPSTPVPTEELTSTTLLNDSSDPSDNFTPSNTESTIDL) form a disordered region. Residues 302-329 (ELTSTTLLNDSSDPSDNFTPSNTESTID) show a composition bias toward polar residues. Residue Ser-524 is part of the active site. In terms of domain architecture, DDHD spans 547–757 (LDFPVANFFA…LAHFILTQLL (211 aa)).

Belongs to the PA-PLA1 family.

The protein resides in the mitochondrion. Functionally, probable phospholipase that hydrolyzes phosphatidic acid. This chain is Probable phospholipase C20G8.02, mitochondrial, found in Schizosaccharomyces pombe (strain 972 / ATCC 24843) (Fission yeast).